The primary structure comprises 213 residues: Large ribosomal subunit protein uL1 (213 aa).

The protein belongs to the universal ribosomal protein uL1 family. Part of the 50S ribosomal subunit.

Functionally, binds directly to 23S rRNA. Probably involved in E site tRNA release. Its function is as follows. Protein L1 is also a translational repressor protein, it controls the translation of its operon by binding to its mRNA. This Methanococcoides burtonii (strain DSM 6242 / NBRC 107633 / OCM 468 / ACE-M) protein is Large ribosomal subunit protein uL1.